Reading from the N-terminus, the 609-residue chain is tRNA uridine 5-carboxymethylaminomethyl modification enzyme MnmG (609 aa).

FAD contacts are provided by residues 11–16 (GAGHAG), Val123, and Thr178. Position 270–284 (270–284 (GPRYCPSIEDKVVRF)) interacts with NAD(+). Gln367 is a binding site for FAD.

The protein belongs to the MnmG family. In terms of assembly, homodimer. Heterotetramer of two MnmE and two MnmG subunits. It depends on FAD as a cofactor.

The protein resides in the cytoplasm. In terms of biological role, NAD-binding protein involved in the addition of a carboxymethylaminomethyl (cmnm) group at the wobble position (U34) of certain tRNAs, forming tRNA-cmnm(5)s(2)U34. This is tRNA uridine 5-carboxymethylaminomethyl modification enzyme MnmG from Mycoplasmopsis synoviae (strain 53) (Mycoplasma synoviae).